The primary structure comprises 444 residues: Probable glycine dehydrogenase (decarboxylating) subunit 1 (444 aa).

Belongs to the GcvP family. N-terminal subunit subfamily. The glycine cleavage system is composed of four proteins: P, T, L and H. In this organism, the P 'protein' is a heterodimer of two subunits.

The catalysed reaction is N(6)-[(R)-lipoyl]-L-lysyl-[glycine-cleavage complex H protein] + glycine + H(+) = N(6)-[(R)-S(8)-aminomethyldihydrolipoyl]-L-lysyl-[glycine-cleavage complex H protein] + CO2. In terms of biological role, the glycine cleavage system catalyzes the degradation of glycine. The P protein binds the alpha-amino group of glycine through its pyridoxal phosphate cofactor; CO(2) is released and the remaining methylamine moiety is then transferred to the lipoamide cofactor of the H protein. The chain is Probable glycine dehydrogenase (decarboxylating) subunit 1 from Chlorobaculum parvum (strain DSM 263 / NCIMB 8327) (Chlorobium vibrioforme subsp. thiosulfatophilum).